Consider the following 822-residue polypeptide: Dextranase (822 aa).

A signal peptide spans Met-1–Ser-38. Disordered stretches follow at residues Glu-607–Leu-669 and Glu-683–Ser-788. Low complexity predominate over residues Asn-619–Thr-636. Positions Ser-693–Asp-705 are enriched in polar residues. Low complexity predominate over residues Ser-706–Ser-761. A compositionally biased stretch (polar residues) spans Leu-771–Ser-788.

This sequence belongs to the glycosyl hydrolase 66 family.

It carries out the reaction Endohydrolysis of (1-&gt;6)-alpha-D-glucosidic linkages in dextran.. The sequence is that of Dextranase (dex) from Streptococcus salivarius.